We begin with the raw amino-acid sequence, 1845 residues long: Vacuolar membrane-associated protein iml1 (1845 aa).

Residues 1–12 (MSLRGPMKRSHL) show a composition bias toward basic residues. Disordered stretches follow at residues 1–48 (MSLR…HGQD), 547–566 (PHLSPKSAAHGSFSRGTAHK), 732–822 (KRRH…GKAP), and 854–982 (SALP…SPQN). Residues 24 to 33 (ATSSQAQAQS) are compositionally biased toward polar residues. Basic and acidic residues predominate over residues 34-47 (HPRDGGPYNDEHGQ). Positions 732–743 (KRRHQRKPSKPK) are enriched in basic residues. Residues 755-772 (AHERLSARSVLRLREHET) are compositionally biased toward basic and acidic residues. Low complexity-rich tracts occupy residues 801 to 822 (VPSKSASPKKPALKPPSAGKAP) and 874 to 886 (VDSFSGSDSASIS). Residues 969–982 (NGGSRDSSIKSPQN) show a composition bias toward polar residues. In terms of domain architecture, DEP spans 1344 to 1419 (GDKGVRMMDR…DGNYFYQISS (76 aa)). Disordered stretches follow at residues 1425–1483 (RPES…KNKA) and 1825–1845 (NDSVSYKGSPRSGSLRPLNLS).

Belongs to the IML1 family.

Its subcellular location is the vacuole membrane. In Aspergillus clavatus (strain ATCC 1007 / CBS 513.65 / DSM 816 / NCTC 3887 / NRRL 1 / QM 1276 / 107), this protein is Vacuolar membrane-associated protein iml1 (iml1).